Reading from the N-terminus, the 582-residue chain is V-type ATP synthase alpha chain (582 aa).

231–238 (GPFGSGKT) is an ATP binding site.

This sequence belongs to the ATPase alpha/beta chains family.

The enzyme catalyses ATP + H2O + 4 H(+)(in) = ADP + phosphate + 5 H(+)(out). Its function is as follows. Produces ATP from ADP in the presence of a proton gradient across the membrane. The V-type alpha chain is a catalytic subunit. This is V-type ATP synthase alpha chain from Deinococcus deserti (strain DSM 17065 / CIP 109153 / LMG 22923 / VCD115).